Consider the following 166-residue polypeptide: uncharacterized protein (166 aa).

4Fe-4S ferredoxin-type domains follow at residues 44 to 73 (AREDLFSAVCNGCGECASACPNGLIQLKQQ), 75 to 104 (ATLEIDYAPCDLCGKCAEVCPTNALHPNFP), and 139 to 166 (STLEIDNERCNGCGECKITCFVAAITLK). [4Fe-4S] cluster is bound by residues cysteine 53, cysteine 56, cysteine 59, cysteine 63, cysteine 84, cysteine 87, cysteine 90, and cysteine 94.

This is an uncharacterized protein from Haemophilus influenzae (strain ATCC 51907 / DSM 11121 / KW20 / Rd).